Consider the following 392-residue polypeptide: 8-amino-7-oxononanoate synthase (392 aa).

Arg-19 contacts substrate. 106 to 107 (GY) contributes to the pyridoxal 5'-phosphate binding site. His-131 contributes to the substrate binding site. Ser-176, His-204, and Thr-233 together coordinate pyridoxal 5'-phosphate. Lys-236 carries the N6-(pyridoxal phosphate)lysine modification. Thr-350 contributes to the substrate binding site.

The protein belongs to the class-II pyridoxal-phosphate-dependent aminotransferase family. BioF subfamily. In terms of assembly, homodimer. Pyridoxal 5'-phosphate serves as cofactor.

The catalysed reaction is 6-carboxyhexanoyl-[ACP] + L-alanine + H(+) = (8S)-8-amino-7-oxononanoate + holo-[ACP] + CO2. Its pathway is cofactor biosynthesis; biotin biosynthesis. Its function is as follows. Catalyzes the decarboxylative condensation of pimeloyl-[acyl-carrier protein] and L-alanine to produce 8-amino-7-oxononanoate (AON), [acyl-carrier protein], and carbon dioxide. The polypeptide is 8-amino-7-oxononanoate synthase (Stutzerimonas stutzeri (strain A1501) (Pseudomonas stutzeri)).